A 246-amino-acid polypeptide reads, in one-letter code: TATA-box-binding protein (246 aa).

The interval 1-27 (MSSDKTSQQTFKLAPNNSVAQSNSIDQ) is disordered. Tandem repeats lie at residues 53-129 (LQNI…AKII) and 143-220 (IQNI…YWVL).

The protein belongs to the TBP family. In terms of assembly, belongs to the TFIID complex together with the TBP-associated factors (TAFs). Binds DNA as monomer.

The protein localises to the nucleus. In terms of biological role, general transcription factor that functions at the core of the DNA-binding multiprotein factor TFIID. Binding of TFIID to the TATA box is the initial transcriptional step of the pre-initiation complex (PIC), playing a role in the activation of eukaryotic genes transcribed by RNA polymerase II. The chain is TATA-box-binding protein from Tetrahymena thermophila.